Consider the following 367-residue polypeptide: Porin Omp2a (367 aa).

The signal sequence occupies residues 1 to 22 (MNIKSLLLGSAAALVAASGAQA).

It belongs to the alphaproteobacteria porin family. In terms of assembly, monomer.

The protein resides in the cell outer membrane. Functionally, forms passive diffusion pores that allow small molecular weight hydrophilic materials across the outer membrane. The polypeptide is Porin Omp2a (omp2a) (Brucella melitensis biotype 1 (strain ATCC 23456 / CCUG 17765 / NCTC 10094 / 16M)).